Here is a 475-residue protein sequence, read N- to C-terminus: ATP synthase subunit beta, chloroplastic (475 aa).

Position 155–162 (155–162 (GGAGVGKT)) interacts with ATP.

The protein belongs to the ATPase alpha/beta chains family. In terms of assembly, F-type ATPases have 2 components, CF(1) - the catalytic core - and CF(0) - the membrane proton channel. CF(1) has five subunits: alpha(3), beta(3), gamma(1), delta(1), epsilon(1). CF(0) has four main subunits: a(1), b(1), b'(1) and c(9-12).

The protein localises to the plastid. Its subcellular location is the chloroplast thylakoid membrane. It carries out the reaction ATP + H2O + 4 H(+)(in) = ADP + phosphate + 5 H(+)(out). In terms of biological role, produces ATP from ADP in the presence of a proton gradient across the membrane. The catalytic sites are hosted primarily by the beta subunits. The polypeptide is ATP synthase subunit beta, chloroplastic (Ochrosphaera neapolitana).